The following is a 360-amino-acid chain: Peptide chain release factor 1 (360 aa).

Gln-235 is modified (N5-methylglutamine). Residues 291-308 are compositionally biased toward basic and acidic residues; sequence ASERRNLLGTGDRSDRNR. Residues 291 to 312 form a disordered region; it reads ASERRNLLGTGDRSDRNRTYNF.

The protein belongs to the prokaryotic/mitochondrial release factor family. Post-translationally, methylated by PrmC. Methylation increases the termination efficiency of RF1.

It localises to the cytoplasm. In terms of biological role, peptide chain release factor 1 directs the termination of translation in response to the peptide chain termination codons UAG and UAA. This chain is Peptide chain release factor 1, found in Yersinia pseudotuberculosis serotype O:1b (strain IP 31758).